The following is a 250-amino-acid chain: Small ribosomal subunit protein uS3 (250 aa).

The KH type-2 domain occupies 39–111 (IRTLIKNHYP…KVQINIFEVK (73 aa)).

It belongs to the universal ribosomal protein uS3 family. In terms of assembly, part of the 30S ribosomal subunit. Forms a tight complex with proteins S10 and S14.

In terms of biological role, binds the lower part of the 30S subunit head. Binds mRNA in the 70S ribosome, positioning it for translation. The polypeptide is Small ribosomal subunit protein uS3 (Phytoplasma vitis (Flavescence doree phytoplasma)).